Consider the following 156-residue polypeptide: CD-NTase/cGAS isopeptidase (156 aa).

Positions 16–156 (LVVIMGHVVT…LITVFKKIES (141 aa)) constitute an MPN domain. Glu-39 serves as the catalytic Proton donor/acceptor. 3 residues coordinate Zn(2+): His-101, His-103, and Asp-114. The short motif at 101 to 114 (HTHPEDRPFPSATD) is the JAMM motif element.

Belongs to the peptidase M67B family. Cap3 isopeptidase subfamily. The cofactor is Zn(2+).

Its activity is regulated as follows. Cleavage of conjugated proteins is inhibited by EDTA. In terms of biological role, metalloprotease priming reversal component of a CBASS system. CBASS (cyclic oligonucleotide-based antiphage signaling system) provides immunity against bacteriophages. The CD-NTase protein (DncV) synthesizes cyclic nucleotides in response to infection; these serve as specific second messenger signals. The signals activate a diverse range of effectors, leading to bacterial cell death and thus abortive phage infection. A type II-A(GA) CBASS system. Functionally, reverses the primed state of DncV, the CD-NTase. Cleaves a DncV-GFP (green fluorescent protein) fusion protein precisely at the C-terminus of DncV. Overexpression decreases the efficacy of CBASS protection against phages T2, T4, T5 and T6, blocks formation of DncV-conjugates in vivo, and inhibits in vivo activation of DncV. Antagonism of phage defense upon overexpression is CBASS-system specific, Cap3 from this bacteria only antagonizes its cognate CBASS system and not that of C.freundii, E.coli or E.hormaechei. Protects E.coli against phage infection. When the CBASS operon (capV-dncV-cap2-cap3) is introduced in E.coli MG1655 there is about 100-fold protection against phages P1 and T2. When the operon is introduced in E.coli MG1655 there is a more than 10(3) decrease in the efficiency of T2 plaque formation. Protects 100-fold against phage T5, offers no protection against T7. When the operon is introduced in E.coli MG1655 it protects against phages T2, T4, T5 and T6. Another paper shows the operon confers protection against phages P1, T2, T5 and T6 but not T4 or lambda. The protein is CD-NTase/cGAS isopeptidase of Vibrio cholerae serotype O1 (strain ATCC 39315 / El Tor Inaba N16961).